Consider the following 465-residue polypeptide: GTPase Der (465 aa).

2 EngA-type G domains span residues 3-167 (PLVA…PERS) and 179-352 (IHIA…VSAL). GTP-binding positions include 9–16 (GRPNVGKS), 57–61 (DTGGM), 119–122 (NKID), 185–192 (GRPNVGKS), 232–236 (DTAGL), and 297–300 (NKWD). The KH-like domain occupies 353-437 (RQFSTSEVNK…PVRFLFREGD (85 aa)).

It belongs to the TRAFAC class TrmE-Era-EngA-EngB-Septin-like GTPase superfamily. EngA (Der) GTPase family. As to quaternary structure, associates with the 50S ribosomal subunit.

Its function is as follows. GTPase that plays an essential role in the late steps of ribosome biogenesis. This chain is GTPase Der, found in Xylella fastidiosa (strain M23).